We begin with the raw amino-acid sequence, 653 residues long: DNA ligase (653 aa).

Residues 32-36 and 80-81 contribute to the NAD(+) site; these read NFEYD and SL. The active-site N6-AMP-lysine intermediate is the Lys-104. NAD(+) is bound by residues Arg-125, Glu-159, and Lys-297. 4 residues coordinate Zn(2+): Cys-386, Cys-389, Cys-406, and Cys-411. Positions 571 to 653 constitute a BRCT domain; sequence GGSEKLKGLT…EEFIQLLNEA (83 aa).

This sequence belongs to the NAD-dependent DNA ligase family. LigA subfamily. The cofactor is Mg(2+). Mn(2+) is required as a cofactor.

It catalyses the reaction NAD(+) + (deoxyribonucleotide)n-3'-hydroxyl + 5'-phospho-(deoxyribonucleotide)m = (deoxyribonucleotide)n+m + AMP + beta-nicotinamide D-nucleotide.. DNA ligase that catalyzes the formation of phosphodiester linkages between 5'-phosphoryl and 3'-hydroxyl groups in double-stranded DNA using NAD as a coenzyme and as the energy source for the reaction. It is essential for DNA replication and repair of damaged DNA. The sequence is that of DNA ligase from Lachnoclostridium phytofermentans (strain ATCC 700394 / DSM 18823 / ISDg) (Clostridium phytofermentans).